The chain runs to 359 residues: ELAV-like protein 2 (359 aa).

Positions Met1–Asn33 are disordered. RRM domains lie at Thr39 to Pro117 and Ala125 to Asn205. The residue at position 221 (Ser221) is a Phosphoserine. In terms of domain architecture, RRM 3 spans Trp276–Asn354.

The protein belongs to the RRM elav family. Interacts with IGF2BP1. Interacts with MAP1B light chain LC1.

RNA-binding protein that binds to the 3' untranslated region (3'UTR) of target mRNAs. Seems to recognize a GAAA motif. Can bind to its own 3'UTR, the FOS 3'UTR and the ID 3'UTR. The protein is ELAV-like protein 2 (ELAVL2) of Pongo abelii (Sumatran orangutan).